A 630-amino-acid polypeptide reads, in one-letter code: MTGRSTYGMCAVCREPWAEGALELFPCRHVFCTVCVVERWRCPSCQRRIGGRRKANPHLLREIAEVTMELKRYRKGRSGIDVTQMARKLGGGGVTTSSEIFRRLEGSKNGRWKILNLSGCGSELQDLTALRDLEALEDLDLSECANLELRELMVVLTLRNLRKLRMKRTMVNDMWCSSIGLLKFLVHLEVDGSRGVTDITGLCRLKTLEALSLDSCINITKGFDKICALPQLTSLSLCQTNVTDKDLRCIHPDGKLKVLRYSSCHEITDLTAIGGMRSLEKLSLSGCWNVTKGLEELCKFSNLRELDISGCLVLGSAVVLKNLINLKVLSVSNCKNFKDLNGLERLVNLDKLNLSGCHGVSSLGFVANLSNLKELDISGCESLVCFDGLQDLNNLEVLYLRDVKSFTNVGAIKNLSKMRELDLSGCERITSLSGLETLKGLEELSLEGCGEIMSFDPIWSLHHLRVLYVSECGNLEDLSGLEGITGLEELYLHGCRKCTNFGPIWNLRNVCVVELSCCENLEDLSGLQCLTGLEELYLIGCEEITPIGVVGNLRNLKCLSTCWCANLKELGGLDRLVNLEKLDLSGCCGLSSSVFMELMSLPKLQWFYGFGSRVPDIVLEELKRRGVHIF.

Residues 10-46 form an RING-type zinc finger; the sequence is CAVCREPWAEGALELFPCRHVFCTVCVVERWRCPSCQ. LRR repeat units follow at residues 184 to 206, 207 to 230, 231 to 251, 255 to 277, 278 to 301, 302 to 324, 325 to 347, 348 to 370, 371 to 393, 394 to 416, 417 to 439, 440 to 462, 463 to 485, 486 to 508, 509 to 531, 532 to 554, 555 to 577, and 578 to 599; these read FLVHLEVDGSRGVTDITGLCRLK, TLEALSLDSCINITKGFDKICALP, QLTSLSLCQTNVTDKDLRCIH, KLKVLRYSSCHEITDLTAIGGMR, SLEKLSLSGCWNVTKGLEELCKFS, NLRELDISGCLVLGSAVVLKNLI, NLKVLSVSNCKNFKDLNGLERLV, NLDKLNLSGCHGVSSLGFVANLS, NLKELDISGCESLVCFDGLQDLN, NLEVLYLRDVKSFTNVGAIKNLS, KMRELDLSGCERITSLSGLETLK, GLEELSLEGCGEIMSFDPIWSLH, HLRVLYVSECGNLEDLSGLEGIT, GLEELYLHGCRKCTNFGPIWNLR, NVCVVELSCCENLEDLSGLQCLT, GLEELYLIGCEEITPIGVVGNLR, NLKCLSTCWCANLKELGGLDRLV, and NLEKLDLSGCCGLSSSVFMELM.

In terms of biological role, may interact with adenylate cyclase to regulate its activity. Its function is as follows. May be involved in the postranscriptional regulation of genes in VSG expression sites. This is Putative adenylate cyclase regulatory protein (ESAG8C) from Trypanosoma equiperdum.